We begin with the raw amino-acid sequence, 94 residues long: Small ribosomal subunit protein uS19 (94 aa).

Belongs to the universal ribosomal protein uS19 family.

Protein S19 forms a complex with S13 that binds strongly to the 16S ribosomal RNA. This is Small ribosomal subunit protein uS19 from Clostridium novyi (strain NT).